The following is a 779-amino-acid chain: Polyribonucleotide nucleotidyltransferase (779 aa).

Residues Asp490 and Asp496 each coordinate Mg(2+). The 62-residue stretch at 557–618 folds into the KH domain; it reads PHILSLKINP…EAVKARIEAV (62 aa). In terms of domain architecture, S1 motif spans 625 to 693; it reads GEEFEGTVVK…DRGKIDLIRP (69 aa). Basic and acidic residues predominate over residues 699-752; the sequence is VPLREPRAPRGGDRGPRRDSDRGGDRGPRREFSDRGPRPEGARSERPEGQRTER. A disordered region spans residues 699–779; the sequence is VPLREPRAPR…AAPVFPRRED (81 aa). The segment covering 757 to 767 has biased composition (polar residues); that stretch reads PATQESSQSSD.

It belongs to the polyribonucleotide nucleotidyltransferase family. It depends on Mg(2+) as a cofactor.

The protein resides in the cytoplasm. It carries out the reaction RNA(n+1) + phosphate = RNA(n) + a ribonucleoside 5'-diphosphate. Its function is as follows. Involved in mRNA degradation. Catalyzes the phosphorolysis of single-stranded polyribonucleotides processively in the 3'- to 5'-direction. The sequence is that of Polyribonucleotide nucleotidyltransferase from Deinococcus radiodurans (strain ATCC 13939 / DSM 20539 / JCM 16871 / CCUG 27074 / LMG 4051 / NBRC 15346 / NCIMB 9279 / VKM B-1422 / R1).